A 238-amino-acid chain; its full sequence is UPF0173 metal-dependent hydrolase Helmi_16730 (238 aa).

Belongs to the UPF0173 family.

The polypeptide is UPF0173 metal-dependent hydrolase Helmi_16730 (Heliobacterium modesticaldum (strain ATCC 51547 / Ice1)).